Here is a 312-residue protein sequence, read N- to C-terminus: Probable myosin light chain kinase DDB_G0282429 (312 aa).

The tract at residues 1-28 (MDRMDSSDEEIDNISDDELQSGDEIEVE) is disordered. Positions 7 to 27 (SDEEIDNISDDELQSGDEIEV) are enriched in acidic residues. Positions 38–290 (YILGNEIGRG…FEQCLIHPWV (253 aa)) constitute a Protein kinase domain. ATP is bound by residues 44-52 (IGRGAFSIV) and Lys67. The active-site Proton acceptor is the Asp158.

This sequence belongs to the protein kinase superfamily. CAMK Ser/Thr protein kinase family. CaMK subfamily.

It catalyses the reaction L-seryl-[myosin light chain] + ATP = O-phospho-L-seryl-[myosin light chain] + ADP + H(+). The enzyme catalyses L-threonyl-[myosin light chain] + ATP = O-phospho-L-threonyl-[myosin light chain] + ADP + H(+). Does not have a calmodulin-binding domain. Functionally, may phosphorylate a specific serine in the N-terminus of a myosin light chain. The sequence is that of Probable myosin light chain kinase DDB_G0282429 from Dictyostelium discoideum (Social amoeba).